We begin with the raw amino-acid sequence, 120 residues long: Myohemerythrin (120 aa).

7 residues coordinate Fe cation: H26, H56, E60, H75, H79, H108, and D113.

Belongs to the hemerythrin family. In terms of assembly, monomer.

It is found in the cytoplasm. Myohemerythrin is an oxygen-binding protein found in the retractor muscles of certain worms. The oxygen-binding site contains two iron atoms. The polypeptide is Myohemerythrin (Theromyzon tessulatum (Duck leech)).